A 355-amino-acid polypeptide reads, in one-letter code: Probable dual-specificity RNA methyltransferase RlmN (355 aa).

Glutamate 89 acts as the Proton acceptor in catalysis. Residues 95–322 (YENRKTVCLS…KRLGVPTSIR (228 aa)) form the Radical SAM core domain. A disulfide bridge connects residues cysteine 102 and cysteine 333. Cysteine 109, cysteine 113, and cysteine 116 together coordinate [4Fe-4S] cluster. S-adenosyl-L-methionine is bound by residues 159–160 (GE), serine 191, 214–216 (SLH), and asparagine 290. Cysteine 333 functions as the S-methylcysteine intermediate in the catalytic mechanism.

This sequence belongs to the radical SAM superfamily. RlmN family. The cofactor is [4Fe-4S] cluster.

The protein localises to the cytoplasm. The enzyme catalyses adenosine(2503) in 23S rRNA + 2 reduced [2Fe-2S]-[ferredoxin] + 2 S-adenosyl-L-methionine = 2-methyladenosine(2503) in 23S rRNA + 5'-deoxyadenosine + L-methionine + 2 oxidized [2Fe-2S]-[ferredoxin] + S-adenosyl-L-homocysteine. It carries out the reaction adenosine(37) in tRNA + 2 reduced [2Fe-2S]-[ferredoxin] + 2 S-adenosyl-L-methionine = 2-methyladenosine(37) in tRNA + 5'-deoxyadenosine + L-methionine + 2 oxidized [2Fe-2S]-[ferredoxin] + S-adenosyl-L-homocysteine. In terms of biological role, specifically methylates position 2 of adenine 2503 in 23S rRNA and position 2 of adenine 37 in tRNAs. The polypeptide is Probable dual-specificity RNA methyltransferase RlmN (Thermus thermophilus (strain ATCC 27634 / DSM 579 / HB8)).